Here is a 338-residue protein sequence, read N- to C-terminus: Mitochondrial E3 ubiquitin protein ligase 1 (338 aa).

Topologically, residues 1 to 3 are cytoplasmic; sequence MEF. Residues 4–24 form a helical membrane-spanning segment; it reads LHESVALGVDLLILGLCAREY. The Mitochondrial intermembrane segment spans residues 25–227; that stretch reads VHYKRTAKVL…LIKRFEDAKT (203 aa). A helical transmembrane segment spans residues 228-248; the sequence is TTILKLVVCSTISAILVAFIA. Residues 249–338 lie on the Cytoplasmic side of the membrane; that stretch reads KKLYRKRKQE…IVSKAAAFIA (90 aa). The segment at 290–326 adopts an RING-type zinc-finger fold; it reads CVVCSTNPKEIILLPCGHVCLCEDCAQKISVTCPVCR.

Interacts with Marf. Post-translationally, auto-ubiquitinated.

Its subcellular location is the mitochondrion outer membrane. The enzyme catalyses S-ubiquitinyl-[E2 ubiquitin-conjugating enzyme]-L-cysteine + [acceptor protein]-L-lysine = [E2 ubiquitin-conjugating enzyme]-L-cysteine + N(6)-ubiquitinyl-[acceptor protein]-L-lysine.. In terms of biological role, exhibits weak E3 ubiquitin-protein ligase activity. E3 ubiquitin ligases accept ubiquitin from an E2 ubiquitin-conjugating enzyme in the form of a thioester and then directly transfer the ubiquitin to targeted substrates. Plays a role in the control of mitochondrial morphology by promoting mitochondrial fission. Negatively regulates the mitochondrial fusion protein marf by promoting its ubiquitination, acting in a pathway that is parallel to the park/pink1 regulatory pathway. The chain is Mitochondrial E3 ubiquitin protein ligase 1 from Drosophila melanogaster (Fruit fly).